The sequence spans 90 residues: Small ribosomal subunit protein uS15 (90 aa).

This sequence belongs to the universal ribosomal protein uS15 family. Part of the 30S ribosomal subunit. Forms a bridge to the 50S subunit in the 70S ribosome, contacting the 23S rRNA.

Its function is as follows. One of the primary rRNA binding proteins, it binds directly to 16S rRNA where it helps nucleate assembly of the platform of the 30S subunit by binding and bridging several RNA helices of the 16S rRNA. Forms an intersubunit bridge (bridge B4) with the 23S rRNA of the 50S subunit in the ribosome. This Campylobacter jejuni subsp. doylei (strain ATCC BAA-1458 / RM4099 / 269.97) protein is Small ribosomal subunit protein uS15.